Reading from the N-terminus, the 1214-residue chain is Delta-latroinsectotoxin-Lt1a (1214 aa).

The tract at residues 64–89 (IGSIPVIGEVVGIVTAPIAIVSHITS) is helix H2 is the probable transmembrane region of the tetrameric pore inserted in the target cell membrane. A helix H8 is the probable transmembrane region of the tetrameric pore inserted in the target cell membrane region spans residues 250 to 269 (ALYALFYGTQTYAAVMFFLL). 15 ANK repeats span residues 464-497 (DIHR…DIEA), 501-532 (NDRS…DIEL), 536-565 (NGFT…DVNA), 570-600 (TNLT…KVNE), 604-633 (DGFT…DKNA), 637-666 (SGLT…DLNI), 670-699 (NHMA…KVSI), 706-734 (NNWT…DINL), 740-769 (GNLT…NIEE), 773-802 (EGYT…DIEA), 806-835 (DNLT…DIGA), 839-868 (DGST…NLKE), 872-901 (NKYL…SLKD), 906-936 (EGRT…TLDE), and 966-994 (VKPT…PEGS). The propeptide at 1020 to 1214 (IVKETNSRYL…IDVHQKMFLR (195 aa)) is C-terminal domain cleavage is required for toxin activation.

It belongs to the cationic peptide 01 (latrotoxin) family. 04 (delta-latroinsectotoxin) subfamily. As to quaternary structure, homotetramer in membrane. Expressed by the venom gland.

The protein resides in the secreted. The protein localises to the target cell membrane. In terms of biological role, insecticidal presynaptic neurotoxin that induces massive neurotransmitter release at insect (but not vertebrate) neuromuscular junctions. Native toxin forms cation-permeable pores (with high permeability to calcium) in lipid membranes locust muscle membrane and artificial lipid bilayers. May bind to insect neurexin-1 homolog, insect adhesion G protein-coupled receptor L1 homolog, and insect receptor-type tyrosine-protein phosphatase S homolog, and induces neurotransmitter exocytosis both by forming tetrameric pores in membranes and signaling via G protein-coupled receptor. Oligomerization is a process independent of divalent cations. This is Delta-latroinsectotoxin-Lt1a from Latrodectus tredecimguttatus (Mediterranean black widow spider).